Reading from the N-terminus, the 270-residue chain is Urease accessory protein UreD (270 aa).

The protein belongs to the UreD family. As to quaternary structure, ureD, UreF and UreG form a complex that acts as a GTP-hydrolysis-dependent molecular chaperone, activating the urease apoprotein by helping to assemble the nickel containing metallocenter of UreC. The UreE protein probably delivers the nickel.

It is found in the cytoplasm. Its function is as follows. Required for maturation of urease via the functional incorporation of the urease nickel metallocenter. This chain is Urease accessory protein UreD, found in Microcystis aeruginosa (strain NIES-843 / IAM M-2473).